A 107-amino-acid polypeptide reads, in one-letter code: L-amino-acid oxidase (107 aa).

Position 35 to 38 (35 to 38 (GPMR)) interacts with FAD. Substrate is bound by residues R38 and H49.

It belongs to the flavin monoamine oxidase family. FIG1 subfamily. As to quaternary structure, homodimer; non-covalently linked. FAD is required as a cofactor. Post-translationally, N-glycosylated. Expressed by the venom gland.

Its subcellular location is the secreted. The enzyme catalyses an L-alpha-amino acid + O2 + H2O = a 2-oxocarboxylate + H2O2 + NH4(+). It carries out the reaction L-leucine + O2 + H2O = 4-methyl-2-oxopentanoate + H2O2 + NH4(+). It catalyses the reaction L-phenylalanine + O2 + H2O = 3-phenylpyruvate + H2O2 + NH4(+). The catalysed reaction is L-tryptophan + O2 + H2O = indole-3-pyruvate + H2O2 + NH4(+). The enzyme catalyses L-methionine + O2 + H2O = 4-methylsulfanyl-2-oxobutanoate + H2O2 + NH4(+). It carries out the reaction L-isoleucine + O2 + H2O = (S)-3-methyl-2-oxopentanoate + H2O2 + NH4(+). It catalyses the reaction L-arginine + O2 + H2O = 5-guanidino-2-oxopentanoate + H2O2 + NH4(+). The catalysed reaction is L-histidine + O2 + H2O = 3-(imidazol-5-yl)pyruvate + H2O2 + NH4(+). Catalyzes an oxidative deamination of predominantly hydrophobic and aromatic L-amino acids, thus producing hydrogen peroxide that may contribute to the diverse toxic effects of this enzyme. Shows high activity on L-Met, moderate activity on L-Trp, L-Leu, L-His, L-Phe, L-Arg, L-Ile, low activity on L-Val, L-Glu, L-Lys, L-Gln, L-Asn, L-Tyr, L-Ala, and no activity on L-Asp, L-Ser, L-Pro, L-Gly, L-Thr and L-Cys. Shows antimicrobial activity inhibiting the growth of both Gram-negative and Gram-positive bacteria. Also inhibits platelet aggregation induced by ADP or collagen. Effects of snake L-amino oxidases on platelets are controversial, since they either induce aggregation or inhibit agonist-induced aggregation. These different effects are probably due to different experimental conditions. This protein may also induce hemorrhage, hemolysis, edema, apoptosis, and have antiparasitic activities. This Macrovipera lebetinus (Levantine viper) protein is L-amino-acid oxidase.